The following is a 1469-amino-acid chain: snRNA-activating protein complex subunit 4 (1469 aa).

Residues 16-82 (ELERILDPGS…DPKDKTLPED (67 aa)) are disordered. Over residues 24 to 36 (GSSGSHVEISESS) the composition is skewed to low complexity. A compositionally biased stretch (acidic residues) spans 37 to 53 (LESDSEADSLPSEDLDP). Serine 68 bears the Phosphoserine mark. An SNAPC5-binding region spans residues 84 to 133 (ETCLQLNMVYQEVIQEKLAEANLLLAQNREQQEELMRDLAGSKGTKVKDG). Positions 250–288 (EEALLGNRLDSHDWEKISNINFEGSRSAEEIRKFWQNSE) constitute a Myb-like 1 domain. Residues 289–343 (HPSINKQEWSREEEERLQAIAAAHGHLEWQKIAEELGTSRSAFQCLQKFQQHNKA) enclose the HTH myb-type 1 domain. Positions 317–341 (WQKIAEELGTSRSAFQCLQKFQQHN) form a DNA-binding region, H-T-H motif. In terms of domain architecture, Myb-like 2 spans 344–395 (LKRKEWTEEEDRMLTQLVQEMRVGSHIPYRRIVYYMEGRDSMQLIYRWTKSL). HTH myb-type domains are found at residues 396–451 (DPGL…HFSL) and 452–503 (KKGR…GKKQ). 2 consecutive DNA-binding regions (H-T-H motif) follow at residues 424-447 (WFKIREEVPGRSDAQCRDRYLRRL) and 476-499 (WAKIASELPHRSGSQCLSKWKIMM). 8 disordered regions span residues 501-558 (KKQG…GDRA), 577-661 (QSTS…QALE), 685-710 (RSCTQKEQLRQPPLPTSSPGVSSGDS), 834-894 (ASSS…KTVS), 932-981 (PLPH…DKRL), 1001-1051 (PAAS…PSPT), 1121-1167 (AAQG…PAEA), and 1184-1266 (IPEP…GPEK). The span at 503 to 516 (QGLRRRRRRARHSV) shows a compositional bias: basic residues. Positions 519 to 541 (SSTSSSGSSSGSSGGSSSSSSSS) are enriched in low complexity. Serine 599 carries the post-translational modification Phosphoserine. The span at 602-618 (KGSSASQGGSKEASTTA) shows a compositional bias: polar residues. Residue serine 626 is modified to Phosphoserine. Positions 932 to 944 (PLPHTPHGRPAPG) are enriched in pro residues. The span at 951–968 (PLSGPGAPAAAKPGTSGS) shows a compositional bias: low complexity. Residues 1014–1029 (ISVSCPESGLGQSQAP) are compositionally biased toward polar residues. Over residues 1039 to 1051 (EAPPFLPAAPSPT) the composition is skewed to pro residues. A Phosphothreonine modification is found at threonine 1157. Positions 1184-1195 (IPEPRTSSHADP) are enriched in basic and acidic residues. Phosphoserine is present on serine 1224. The tract at residues 1281–1393 (ATQQWLGGQR…QGVRTTLSVP (113 aa)) is SNAPC2-binding. Phosphoserine occurs at positions 1398, 1400, and 1440. The tract at residues 1430 to 1449 (APDSGKCSASSCLDTSNDPD) is disordered. The span at 1436–1445 (CSASSCLDTS) shows a compositional bias: polar residues.

Part of the SNAPc complex composed of 5 subunits: SNAPC1, SNAPC2, SNAPC3, SNAPC4 and SNAPC5. SNAPC4 interacts with SNAPC1, SNAPC2, SNAPC5, BRF2 and TBP.

The protein localises to the nucleus. In terms of biological role, part of the SNAPc complex required for the transcription of both RNA polymerase II and III small-nuclear RNA genes. Binds to the proximal sequence element (PSE), a non-TATA-box basal promoter element common to these 2 types of genes. Recruits TBP and BRF2 to the U6 snRNA TATA box. The polypeptide is snRNA-activating protein complex subunit 4 (Homo sapiens (Human)).